A 530-amino-acid chain; its full sequence is GMP synthase [glutamine-hydrolyzing] (530 aa).

A Glutamine amidotransferase type-1 domain is found at 4 to 205 (RILILDYGSQ…VKDICGCEGD (202 aa)). Cysteine 84 (nucleophile) is an active-site residue. Residues histidine 179 and glutamate 181 contribute to the active site. One can recognise a GMPS ATP-PPase domain in the interval 206-398 (WNMPDYISEA…LGLPPQMVYR (193 aa)). 233 to 239 (SGGVDSL) is a binding site for ATP.

As to quaternary structure, homodimer.

The enzyme catalyses XMP + L-glutamine + ATP + H2O = GMP + L-glutamate + AMP + diphosphate + 2 H(+). Its pathway is purine metabolism; GMP biosynthesis; GMP from XMP (L-Gln route): step 1/1. In terms of biological role, catalyzes the synthesis of GMP from XMP. The polypeptide is GMP synthase [glutamine-hydrolyzing] (Bordetella parapertussis (strain 12822 / ATCC BAA-587 / NCTC 13253)).